The sequence spans 379 residues: Cytochrome b (379 aa).

The next 4 helical transmembrane spans lie at 33 to 53, 77 to 98, 113 to 133, and 178 to 198; these read FGSL…FLDM, WLIR…YLHI, WNIG…GYVL, and FFAF…VHLL. Positions 83 and 97 each coordinate heme b. The heme b site is built by H182 and H196. H201 contacts a ubiquinone. The next 4 helical transmembrane spans lie at 226 to 246, 288 to 308, 320 to 340, and 347 to 367; these read TKDF…VPFF, LGGV…PHIQ, ISQF…WIGG, and FIII…VLMP.

It belongs to the cytochrome b family. The cytochrome bc1 complex contains 11 subunits: 3 respiratory subunits (MT-CYB, CYC1 and UQCRFS1), 2 core proteins (UQCRC1 and UQCRC2) and 6 low-molecular weight proteins (UQCRH/QCR6, UQCRB/QCR7, UQCRQ/QCR8, UQCR10/QCR9, UQCR11/QCR10 and a cleavage product of UQCRFS1). This cytochrome bc1 complex then forms a dimer. It depends on heme b as a cofactor.

It is found in the mitochondrion inner membrane. Functionally, component of the ubiquinol-cytochrome c reductase complex (complex III or cytochrome b-c1 complex) that is part of the mitochondrial respiratory chain. The b-c1 complex mediates electron transfer from ubiquinol to cytochrome c. Contributes to the generation of a proton gradient across the mitochondrial membrane that is then used for ATP synthesis. The chain is Cytochrome b (MT-CYB) from Dipodomys nelsoni (Nelson's kangaroo rat).